The sequence spans 231 residues: Large ribosomal subunit protein uL1 (231 aa).

It belongs to the universal ribosomal protein uL1 family. As to quaternary structure, part of the 50S ribosomal subunit.

In terms of biological role, binds directly to 23S rRNA. The L1 stalk is quite mobile in the ribosome, and is involved in E site tRNA release. Functionally, protein L1 is also a translational repressor protein, it controls the translation of the L11 operon by binding to its mRNA. This chain is Large ribosomal subunit protein uL1, found in Clostridium kluyveri (strain NBRC 12016).